The sequence spans 699 residues: Cysteine--tRNA ligase (699 aa).

The segment at 1–226 (MTTITEKRLT…SEQQRLIHNP (226 aa)) is unknown. C254 contributes to the Zn(2+) binding site. The short motif at 256–266 (MTVYDYCHLGH) is the 'HIGH' region element. 3 residues coordinate Zn(2+): C435, H460, and E464. The 'KMSKS' region motif lies at 508–512 (KMSKS). Residue K511 participates in ATP binding.

The protein belongs to the class-I aminoacyl-tRNA synthetase family. Monomer. The cofactor is Zn(2+).

The protein resides in the cytoplasm. It carries out the reaction tRNA(Cys) + L-cysteine + ATP = L-cysteinyl-tRNA(Cys) + AMP + diphosphate. The protein is Cysteine--tRNA ligase (cysS) of Neisseria meningitidis serogroup A / serotype 4A (strain DSM 15465 / Z2491).